We begin with the raw amino-acid sequence, 937 residues long: Isoleucine--tRNA ligase (937 aa).

The 'HIGH' region motif lies at 58-68; that stretch reads PYANGTLHLGH. E561 provides a ligand contact to L-isoleucyl-5'-AMP. A 'KMSKS' region motif is present at residues 602–606; it reads KMSKS. K605 provides a ligand contact to ATP. Residues C900, C903, C920, and C923 each contribute to the Zn(2+) site.

Belongs to the class-I aminoacyl-tRNA synthetase family. IleS type 1 subfamily. In terms of assembly, monomer. The cofactor is Zn(2+).

The protein resides in the cytoplasm. It carries out the reaction tRNA(Ile) + L-isoleucine + ATP = L-isoleucyl-tRNA(Ile) + AMP + diphosphate. Catalyzes the attachment of isoleucine to tRNA(Ile). As IleRS can inadvertently accommodate and process structurally similar amino acids such as valine, to avoid such errors it has two additional distinct tRNA(Ile)-dependent editing activities. One activity is designated as 'pretransfer' editing and involves the hydrolysis of activated Val-AMP. The other activity is designated 'posttransfer' editing and involves deacylation of mischarged Val-tRNA(Ile). In Histophilus somni (strain 2336) (Haemophilus somnus), this protein is Isoleucine--tRNA ligase.